The sequence spans 145 residues: MAFDKLGRFFGISNDDDELEKEEYTTSNKDENENLPLNSVSRDNIVSIKSGLNSAKSKIVLYEPRVYSDAKDVAQNLLNNKAVVINFSRMEDSSARRIVDFITGTVYALNGEIQRIGDKIFLATPPKFVTDGKISDLVDKKDNLS.

Belongs to the SepF family. As to quaternary structure, homodimer. Interacts with FtsZ.

The protein resides in the cytoplasm. Cell division protein that is part of the divisome complex and is recruited early to the Z-ring. Probably stimulates Z-ring formation, perhaps through the cross-linking of FtsZ protofilaments. Its function overlaps with FtsA. This chain is Cell division protein SepF, found in Lactobacillus helveticus (strain DPC 4571).